A 524-amino-acid polypeptide reads, in one-letter code: Ankyrin repeat-containing protein At5g02620 (524 aa).

8 ANK repeats span residues 16 to 45, 55 to 84, 90 to 119, 124 to 153, 158 to 187, 192 to 222, 226 to 255, and 260 to 289; these read RDDT…GVEL, SGET…SVLA, NGFD…ELSF, SKTT…DLAA, NGKT…GMVT, KGQT…LINS, KGNT…VSRV, and SGET…QNAR. Helical transmembrane passes span 349-369, 399-419, 441-461, and 472-492; these read AINS…AAIF, FLIF…VVVV, LMWM…FVVV, and VTAI…YWVI. At serine 508 the chain carries Phosphoserine.

It is found in the membrane. The chain is Ankyrin repeat-containing protein At5g02620 from Arabidopsis thaliana (Mouse-ear cress).